The following is a 340-amino-acid chain: Serine racemase (340 aa).

E13 serves as a coordination point for Mg(2+). S31, S32, I33, K51, and T52 together coordinate ATP. Catalysis depends on K56, which acts as the Proton acceptor. At K56 the chain carries N6-(pyridoxal phosphate)lysine. Residues P69 and T81 each coordinate Ca(2+). The active-site Proton acceptor is the S84. N86 contributes to the pyridoxal 5'-phosphate binding site. An ATP-binding site is contributed by Q89. The residue at position 113 (C113) is an S-nitrosocysteine. Residue Y121 participates in ATP binding. A pyridoxal 5'-phosphate-binding site is contributed by N154. D178 serves as a coordination point for Mg(2+). Pyridoxal 5'-phosphate-binding residues include G185, G186, G187, G188, and M189. 4 residues coordinate Mg(2+): E210, A214, D216, and N247. Ca(2+) is bound by residues E210, A214, D216, and N247. E210, A214, and D216 together coordinate Mn(2+). K279 provides a ligand contact to ATP. S313 provides a ligand contact to pyridoxal 5'-phosphate. N316 provides a ligand contact to ATP.

Belongs to the serine/threonine dehydratase family. In terms of assembly, homodimer. Requires Mg(2+) as cofactor. Mn(2+) serves as cofactor. The cofactor is Ca(2+). Pyridoxal 5'-phosphate is required as a cofactor. S-nitrosylated, leading to decrease the enzyme activity. As to expression, expressed in the cerebellum, hippocampus, dorsolateral prefrontal cortex, and in motor neurons and glial cells of the lumbar spinal cord (at protein level). Increased in the dorsolateral prefrontal cortex of schizophrenic patients (at protein level). Brain: expressed at high levels in hippocampus and corpus callosum, intermediate levels in substantia nigra and caudate, and low levels in amygdala, thalamus, and subthalamic nuclei. Expressed in heart, skeletal muscle, kidney, and liver.

It carries out the reaction L-serine = D-serine. It catalyses the reaction D-serine = pyruvate + NH4(+). The enzyme catalyses L-serine = pyruvate + NH4(+). Its activity is regulated as follows. Allosterically activated by magnesium, and possibly also other divalent metal cations. Allosterically activated by ATP, ADP or GTP. Competitively inhibited by malonate. Inhibited by meso-tartrate and malonate. Catalyzes the synthesis of D-serine from L-serine. D-serine is a key coagonist with glutamate at NMDA receptors. Has dehydratase activity towards both L-serine and D-serine. The protein is Serine racemase (SRR) of Homo sapiens (Human).